The chain runs to 310 residues: Ribosomal RNA small subunit methyltransferase H (310 aa).

S-adenosyl-L-methionine-binding positions include 32-34 (GGH), Asp-52, Phe-79, Asp-100, and Gln-107.

It belongs to the methyltransferase superfamily. RsmH family.

The protein localises to the cytoplasm. It carries out the reaction cytidine(1402) in 16S rRNA + S-adenosyl-L-methionine = N(4)-methylcytidine(1402) in 16S rRNA + S-adenosyl-L-homocysteine + H(+). Specifically methylates the N4 position of cytidine in position 1402 (C1402) of 16S rRNA. This chain is Ribosomal RNA small subunit methyltransferase H, found in Bacillus anthracis (strain A0248).